The following is a 487-amino-acid chain: Glutamate--tRNA ligase 2 (487 aa).

Positions 24-34 match the 'HIGH' region motif; it reads PSPTGFLHIGG. Positions 258–262 match the 'KMSKS' region motif; that stretch reads KLSKR. Residue Lys-261 participates in ATP binding.

It belongs to the class-I aminoacyl-tRNA synthetase family. Glutamate--tRNA ligase type 1 subfamily. As to quaternary structure, monomer.

Its subcellular location is the cytoplasm. The catalysed reaction is tRNA(Glu) + L-glutamate + ATP = L-glutamyl-tRNA(Glu) + AMP + diphosphate. Functionally, catalyzes the attachment of glutamate to tRNA(Glu) in a two-step reaction: glutamate is first activated by ATP to form Glu-AMP and then transferred to the acceptor end of tRNA(Glu). The protein is Glutamate--tRNA ligase 2 of Novosphingobium aromaticivorans (strain ATCC 700278 / DSM 12444 / CCUG 56034 / CIP 105152 / NBRC 16084 / F199).